The following is a 179-amino-acid chain: Large ribosomal subunit protein uL5 (179 aa).

This sequence belongs to the universal ribosomal protein uL5 family. Part of the 50S ribosomal subunit; part of the 5S rRNA/L5/L18/L25 subcomplex. Contacts the 5S rRNA and the P site tRNA. Forms a bridge to the 30S subunit in the 70S ribosome.

Functionally, this is one of the proteins that bind and probably mediate the attachment of the 5S RNA into the large ribosomal subunit, where it forms part of the central protuberance. In the 70S ribosome it contacts protein S13 of the 30S subunit (bridge B1b), connecting the 2 subunits; this bridge is implicated in subunit movement. Contacts the P site tRNA; the 5S rRNA and some of its associated proteins might help stabilize positioning of ribosome-bound tRNAs. The protein is Large ribosomal subunit protein uL5 of Shewanella sp. (strain ANA-3).